The sequence spans 70 residues: Sporulation protein YhaL (70 aa).

A helical transmembrane segment spans residues 3 to 23 (FFPWWVYLCIVGIIFSAYKLV). The segment at 48–70 (MEKERERRSSQQHEEENQNHSIA) is disordered.

The protein resides in the cell membrane. In terms of biological role, required for efficient sporulation. This Bacillus subtilis (strain 168) protein is Sporulation protein YhaL (yhaL).